The primary structure comprises 158 residues: MSWTTPKKAIMLAAAAEGGTKLNAFDNALLKMGIGNVNLVKLSSVIPAHIEWLDELPKNIPIGMLLPTVYAHIESDEPGSTISAALGVGLSENNEGGLIYEYAGYCTKEEAEEMVRKMVEEGFKVRGWKLKEIKVISAEITVKDKPAAAVAAVVMFPY.

S44 is subject to Pyruvic acid (Ser).

Belongs to the PdaD family. Pyruvate serves as cofactor.

It carries out the reaction L-arginine + H(+) = agmatine + CO2. The protein is Pyruvoyl-dependent arginine decarboxylase of Pyrococcus abyssi (strain GE5 / Orsay).